Consider the following 177-residue polypeptide: Large ribosomal subunit protein uL10 (177 aa).

The protein belongs to the universal ribosomal protein uL10 family. As to quaternary structure, part of the ribosomal stalk of the 50S ribosomal subunit. The N-terminus interacts with L11 and the large rRNA to form the base of the stalk. The C-terminus forms an elongated spine to which L12 dimers bind in a sequential fashion forming a multimeric L10(L12)X complex.

In terms of biological role, forms part of the ribosomal stalk, playing a central role in the interaction of the ribosome with GTP-bound translation factors. This Leptospira borgpetersenii serovar Hardjo-bovis (strain JB197) protein is Large ribosomal subunit protein uL10.